A 129-amino-acid polypeptide reads, in one-letter code: Large ribosomal subunit protein bL19c (129 aa).

The protein belongs to the bacterial ribosomal protein bL19 family.

It localises to the plastid. In Prototheca wickerhamii, this protein is Large ribosomal subunit protein bL19c.